The primary structure comprises 228 residues: L-ribulose-5-phosphate 4-epimerase UlaF (228 aa).

Substrate-binding positions include 26 to 27 (GN), 43 to 44 (SG), and 72 to 73 (SS). Residues Asp74, His93, and His95 each coordinate Zn(2+). Catalysis depends on Asp118, which acts as the Proton donor/acceptor. His167 serves as a coordination point for Zn(2+). The active-site Proton donor/acceptor is Tyr225.

This sequence belongs to the aldolase class II family. AraD/FucA subfamily. Zn(2+) serves as cofactor.

It carries out the reaction L-ribulose 5-phosphate = D-xylulose 5-phosphate. It functions in the pathway cofactor degradation; L-ascorbate degradation; D-xylulose 5-phosphate from L-ascorbate: step 4/4. Functionally, catalyzes the isomerization of L-ribulose 5-phosphate to D-xylulose 5-phosphate. Is involved in the anaerobic L-ascorbate utilization. The sequence is that of L-ribulose-5-phosphate 4-epimerase UlaF from Escherichia coli (strain SE11).